Here is a 192-residue protein sequence, read N- to C-terminus: uncharacterized protein (192 aa).

To A.aeolicus AQ_054.

This is an uncharacterized protein from Thermotoga maritima (strain ATCC 43589 / DSM 3109 / JCM 10099 / NBRC 100826 / MSB8).